The following is a 340-amino-acid chain: CMP-N-acetylneuraminate-beta-galactosamide-alpha-2,3-sialyltransferase 1 (340 aa).

The Cytoplasmic portion of the chain corresponds to 1 to 13; it reads MVTLRKRTLKVLT. A helical; Signal-anchor for type II membrane protein transmembrane segment spans residues 14–34; that stretch reads FLVLFIFLTSFFLNYSHTMVA. Over 35–340 the chain is Lumenal; the sequence is TTWFPKQMVL…INKIRIFKGR (306 aa). Disulfide bonds link Cys59-Cys64, Cys61-Cys139, and Cys142-Cys281. N-linked (GlcNAc...) asparagine glycosylation occurs at Asn79. Gln105 is a binding site for substrate. A glycan (N-linked (GlcNAc...) asparagine) is linked at Asn114. 2 residues coordinate substrate: Asn147 and Asn170. Residue Asn201 is glycosylated (N-linked (GlcNAc...) asparagine). Tyr230, Tyr266, Gly270, Gly290, His299, and His316 together coordinate substrate. N-linked (GlcNAc...) asparagine glycosylation is present at Asn323.

Belongs to the glycosyltransferase 29 family. The soluble form derives from the membrane form by proteolytic processing. As to expression, expressed in several tissues. Highest expression in lung, liver, skeletal muscle, kidney, pancreas, spleen and placenta.

It is found in the golgi apparatus. The protein localises to the golgi stack membrane. It localises to the trans-Golgi network membrane. Its subcellular location is the secreted. It catalyses the reaction a beta-D-galactosyl-(1-&gt;3)-N-acetyl-alpha-D-galactosaminyl derivative + CMP-N-acetyl-beta-neuraminate = an N-acetyl-alpha-neuraminyl-(2-&gt;3)-beta-D-galactosyl-(1-&gt;3)-N-acetyl-alpha-D-galactosaminyl derivative + CMP + H(+). It carries out the reaction a ganglioside GM1 + CMP-N-acetyl-beta-neuraminate = a ganglioside GD1a + CMP + H(+). The enzyme catalyses a ganglioside GM1 (d18:1(4E)) + CMP-N-acetyl-beta-neuraminate = a ganglioside GD1a (d18:1(4E)) + CMP + H(+). The catalysed reaction is ganglioside GM1 (d18:1(4E)/18:0) + CMP-N-acetyl-beta-neuraminate = ganglioside GD1a (18:1(4E)/18:0) + CMP + H(+). It catalyses the reaction a ganglioside GA1 + CMP-N-acetyl-beta-neuraminate = a ganglioside GM1b + CMP + H(+). It carries out the reaction a ganglioside GA1 (d18:1(4E)) + CMP-N-acetyl-beta-neuraminate = a ganglioside GM1b (d18:1(4E)) + CMP + H(+). The enzyme catalyses a ganglioside GD1b + CMP-N-acetyl-beta-neuraminate = a ganglioside GT1b + CMP + H(+). The catalysed reaction is a 3-O-[beta-D-galactosyl-(1-&gt;3)-N-acetyl-alpha-D-galactosaminyl]-L-threonyl-[protein] + CMP-N-acetyl-beta-neuraminate = a 3-O-[N-acetyl-alpha-neuraminyl-(2-&gt;3)-beta-D-galactosyl-(1-&gt;3)-N-acetyl-alpha-D-galactosaminyl]-L-threonyl-[protein] + CMP + H(+). It catalyses the reaction a 3-O-[beta-D-galactosyl-(1-&gt;3)-N-acetyl-alpha-D-galactosaminyl]-L-seryl-[protein] + CMP-N-acetyl-beta-neuraminate = 3-O-[N-acetyl-alpha-neuraminyl-(2-&gt;3)-beta-D-galactosyl-(1-&gt;3)-N-acetyl-alpha-D-galactosaminyl]-L-seryl-[protein] + CMP + H(+). Its pathway is protein modification; protein glycosylation. The protein operates within glycolipid biosynthesis. Functionally, a beta-galactoside alpha2-&gt;3 sialyltransferase involved in terminal sialylation of glycoproteins and glycolipids. Catalyzes the transfer of sialic acid (N-acetyl-neuraminic acid; Neu5Ac) from the nucleotide sugar donor CMP-Neu5Ac onto acceptor Galbeta-(1-&gt;3)-GalNAc-terminated glycoconjugates through an alpha2-3 linkage. Adds sialic acid to the core 1 O-glycan, Galbeta-(1-&gt;3)-GalNAc-O-Ser/Thr, which is a major structure of mucin-type O-glycans. As part of a homeostatic mechanism that regulates CD8-positive T cell numbers, sialylates core 1 O-glycans of T cell glycoproteins, SPN/CD43 and PTPRC/CD45. Prevents premature apoptosis of thymic CD8-positive T cells prior to peripheral emigration, whereas in the secondary lymphoid organs controls the survival of CD8-positive memory T cells generated following a successful immune response. Transfers sialic acid to asialofetuin, presumably onto Galbeta-(1-&gt;3)-GalNAc-O-Ser. Sialylates GM1a, GA1 and GD1b gangliosides to form GD1a, GM1b and GT1b, respectively. The polypeptide is CMP-N-acetylneuraminate-beta-galactosamide-alpha-2,3-sialyltransferase 1 (Homo sapiens (Human)).